Consider the following 386-residue polypeptide: Myosin light chain kinase family member 4 (386 aa).

Ser100 carries the post-translational modification Phosphoserine. The region spanning 107–361 is the Protein kinase domain; the sequence is VSKSEILGGG…ASEALKHPWL (255 aa). ATP contacts are provided by residues 113-121 and Lys136; that span reads LGGGRFGQV. Asp227 acts as the Proton acceptor in catalysis.

It belongs to the protein kinase superfamily. CAMK Ser/Thr protein kinase family.

It carries out the reaction L-seryl-[protein] + ATP = O-phospho-L-seryl-[protein] + ADP + H(+). The catalysed reaction is L-threonyl-[protein] + ATP = O-phospho-L-threonyl-[protein] + ADP + H(+). This Mus musculus (Mouse) protein is Myosin light chain kinase family member 4 (Mylk4).